Consider the following 162-residue polypeptide: NADH-quinone oxidoreductase subunit I 2 (162 aa).

4Fe-4S ferredoxin-type domains follow at residues 53–83 and 93–122; these read LRRY…IDSE and TRYD…ETRI. The [4Fe-4S] cluster site is built by Cys-63, Cys-66, Cys-69, Cys-73, Cys-102, Cys-105, Cys-108, and Cys-112.

It belongs to the complex I 23 kDa subunit family. In terms of assembly, NDH-1 is composed of 14 different subunits. Subunits NuoA, H, J, K, L, M, N constitute the membrane sector of the complex. It depends on [4Fe-4S] cluster as a cofactor.

It is found in the cell inner membrane. It catalyses the reaction a quinone + NADH + 5 H(+)(in) = a quinol + NAD(+) + 4 H(+)(out). In terms of biological role, NDH-1 shuttles electrons from NADH, via FMN and iron-sulfur (Fe-S) centers, to quinones in the respiratory chain. The immediate electron acceptor for the enzyme in this species is believed to be ubiquinone. Couples the redox reaction to proton translocation (for every two electrons transferred, four hydrogen ions are translocated across the cytoplasmic membrane), and thus conserves the redox energy in a proton gradient. The protein is NADH-quinone oxidoreductase subunit I 2 of Nitrosococcus oceani (strain ATCC 19707 / BCRC 17464 / JCM 30415 / NCIMB 11848 / C-107).